The chain runs to 393 residues: S-adenosylmethionine synthase (393 aa).

Position 16 (H16) interacts with ATP. D18 serves as a coordination point for Mg(2+). E44 contacts K(+). L-methionine is bound by residues E57 and Q100. The tract at residues 100–110 (QSNDIAQGVDH) is flexible loop. Residues 167–169 (DAK), 238–239 (RF), D247, 253–254 (RK), A270, and K274 contribute to the ATP site. Residue D247 coordinates L-methionine. L-methionine is bound at residue K278.

The protein belongs to the AdoMet synthase family. As to quaternary structure, homotetramer; dimer of dimers. The cofactor is Mg(2+). K(+) is required as a cofactor.

It is found in the cytoplasm. The enzyme catalyses L-methionine + ATP + H2O = S-adenosyl-L-methionine + phosphate + diphosphate. Its pathway is amino-acid biosynthesis; S-adenosyl-L-methionine biosynthesis; S-adenosyl-L-methionine from L-methionine: step 1/1. Its function is as follows. Catalyzes the formation of S-adenosylmethionine (AdoMet) from methionine and ATP. The overall synthetic reaction is composed of two sequential steps, AdoMet formation and the subsequent tripolyphosphate hydrolysis which occurs prior to release of AdoMet from the enzyme. This Leptothrix cholodnii (strain ATCC 51168 / LMG 8142 / SP-6) (Leptothrix discophora (strain SP-6)) protein is S-adenosylmethionine synthase.